Reading from the N-terminus, the 649-residue chain is Acetyl-coenzyme A synthetase (649 aa).

Residues 189 to 192, threonine 311, and asparagine 335 contribute to the CoA site; that span reads RGGK. ATP is bound by residues 387–389, 411–416, aspartate 500, and arginine 515; these read GEP and DTWWQT. Serine 523 contacts CoA. Arginine 526 is a binding site for ATP. Residues valine 537, histidine 539, and valine 542 each contribute to the Mg(2+) site. A CoA-binding site is contributed by arginine 584. The residue at position 609 (lysine 609) is an N6-acetyllysine.

This sequence belongs to the ATP-dependent AMP-binding enzyme family. Requires Mg(2+) as cofactor. Post-translationally, acetylated. Deacetylation by the SIR2-homolog deacetylase activates the enzyme.

The enzyme catalyses acetate + ATP + CoA = acetyl-CoA + AMP + diphosphate. Functionally, catalyzes the conversion of acetate into acetyl-CoA (AcCoA), an essential intermediate at the junction of anabolic and catabolic pathways. AcsA undergoes a two-step reaction. In the first half reaction, AcsA combines acetate with ATP to form acetyl-adenylate (AcAMP) intermediate. In the second half reaction, it can then transfer the acetyl group from AcAMP to the sulfhydryl group of CoA, forming the product AcCoA. In Rhizobium meliloti (strain 1021) (Ensifer meliloti), this protein is Acetyl-coenzyme A synthetase.